A 181-amino-acid polypeptide reads, in one-letter code: Alkyl hydroperoxide reductase AhpD (181 aa).

Catalysis depends on Cys131, which acts as the Proton donor. Cysteines 131 and 134 form a disulfide. The active-site Cysteine sulfenic acid (-SOH) intermediate is Cys134.

Belongs to the AhpD family.

The catalysed reaction is N(6)-[(R)-dihydrolipoyl]-L-lysyl-[lipoyl-carrier protein] + a hydroperoxide = N(6)-[(R)-lipoyl]-L-lysyl-[lipoyl-carrier protein] + an alcohol + H2O. Antioxidant protein with alkyl hydroperoxidase activity. Required for the reduction of the AhpC active site cysteine residues and for the regeneration of the AhpC enzyme activity. The protein is Alkyl hydroperoxide reductase AhpD of Rhodopseudomonas palustris (strain BisA53).